Consider the following 581-residue polypeptide: 2-succinyl-5-enolpyruvyl-6-hydroxy-3-cyclohexene-1-carboxylate synthase (581 aa).

Belongs to the TPP enzyme family. MenD subfamily. Homodimer. Mg(2+) is required as a cofactor. Mn(2+) serves as cofactor. The cofactor is thiamine diphosphate.

It carries out the reaction isochorismate + 2-oxoglutarate + H(+) = 5-enolpyruvoyl-6-hydroxy-2-succinyl-cyclohex-3-ene-1-carboxylate + CO2. Its pathway is quinol/quinone metabolism; 1,4-dihydroxy-2-naphthoate biosynthesis; 1,4-dihydroxy-2-naphthoate from chorismate: step 2/7. The protein operates within quinol/quinone metabolism; menaquinone biosynthesis. Functionally, catalyzes the thiamine diphosphate-dependent decarboxylation of 2-oxoglutarate and the subsequent addition of the resulting succinic semialdehyde-thiamine pyrophosphate anion to isochorismate to yield 2-succinyl-5-enolpyruvyl-6-hydroxy-3-cyclohexene-1-carboxylate (SEPHCHC). This is 2-succinyl-5-enolpyruvyl-6-hydroxy-3-cyclohexene-1-carboxylate synthase from Psychromonas ingrahamii (strain DSM 17664 / CCUG 51855 / 37).